Here is a 328-residue protein sequence, read N- to C-terminus: Homeobox protein Hox-C13 (328 aa).

The interval 23-48 is disordered; it reads AAESGSGGGGGGGGAGGAGGGCSGAS. Over residues 27-45 the composition is skewed to gly residues; that stretch reads GSGGGGGGGGAGGAGGGCS. The segment at residues 258 to 317 is a DNA-binding region (homeobox); the sequence is GRKKRVPYTKVQLKELEKEYAASKFITKEKRRRISATTNLSERQVTIWFQNRRVKEKKVV.

This sequence belongs to the Abd-B homeobox family. In terms of tissue distribution, expressed in differentiating keratinocytes. In the hair follicle lower matrix, expressed in all 3 hair shaft-forming compartments, i.e. cuticle, cortex and medulla. Expression stops sharply at the boundary with the germinal matrix compartment.

It is found in the nucleus. In terms of biological role, transcription factor which plays a role in hair follicle differentiation. Regulates FOXQ1 expression and that of other hair-specific genes. The polypeptide is Homeobox protein Hox-C13 (Hoxc13) (Mus musculus (Mouse)).